Here is a 144-residue protein sequence, read N- to C-terminus: MIKLECLQDPSPRKRRTKLLGRGPSSGHGKTSSRGHKGDCSRSGYKRRFGYEGGGVPLYRRVPTRGFSHKRFDKCVEEITTQRLNEIFDNGAEVSLEALKERKVIHRETSRVKVILKGALDKKLVWKDAAIVLSEGVKSLIEAV.

The tract at residues 1 to 49 (MIKLECLQDPSPRKRRTKLLGRGPSSGHGKTSSRGHKGDCSRSGYKRRF) is disordered.

This sequence belongs to the universal ribosomal protein uL15 family. As to quaternary structure, part of the 50S ribosomal subunit.

Its function is as follows. Binds to the 23S rRNA. This chain is Large ribosomal subunit protein uL15, found in Chlamydia trachomatis serovar A (strain ATCC VR-571B / DSM 19440 / HAR-13).